A 470-amino-acid chain; its full sequence is Ubiquitin carboxyl-terminal hydrolase calypso (470 aa).

The 231-residue stretch at G11 to T241 folds into the UCH catalytic domain. C98 acts as the Nucleophile in catalysis. The active-site Proton donor is H177. Residues E260–E280 are a coiled coil. A ULD domain is found at N392–T420. Positions R422 to K470 are positively charged C-terminal tail required for binding nucleosomes. Residues K423 to S434 show a composition bias toward polar residues. The disordered stretch occupies residues K423–K470. A compositionally biased stretch (basic residues) spans S456–K470.

This sequence belongs to the peptidase C12 family. BAP1 subfamily. In terms of assembly, catalytic component of the polycomb repressive deubiquitinase (PR-DUB) complex, at least composed of caly/calypso, Asx and sba (MBD5/6 homolog). The PR-DUB complex associates with nucleosomes to mediate deubiquitination of histone H2AK118ub1 substrates; the association requires the positively charged C-terminal tail of caly, probably due to direct binding of DNA. Interacts (via ULD domain) with Asx (via DEUBAD domain); the interaction produces a stable heterodimer with a composite binding site for ubiquitin. Homodimerizes (via coiled-coil hinge-region between the UCH and ULD domains) to mediate assembly of 2 copies of the caly-Asx heterodimer into a bisymmetric tetramer; dimerization enhances PR-DUB association with nucleosomes.

It localises to the nucleus. It catalyses the reaction Thiol-dependent hydrolysis of ester, thioester, amide, peptide and isopeptide bonds formed by the C-terminal Gly of ubiquitin (a 76-residue protein attached to proteins as an intracellular targeting signal).. Catalytic component of the polycomb repressive deubiquitinase (PR-DUB) complex, a complex that specifically mediates deubiquitination of histone H2A monoubiquitinated at 'Lys-119' (H2AK118ub1). Mediates bisymmetric organization of the PR-DUB complex and is involved in association with nucleosomes to mediate deubiquitination. Does not deubiquitinate monoubiquitinated histone H2B. Required to maintain the transcriptionally repressive state of homeotic genes throughout development. The PR-DUB complex has weak or no activity toward 'Lys-48'- and 'Lys-63'-linked polyubiquitin chains. Polycomb group (PcG) protein. The protein is Ubiquitin carboxyl-terminal hydrolase calypso of Culex quinquefasciatus (Southern house mosquito).